We begin with the raw amino-acid sequence, 635 residues long: Two-component response regulator ARR18 (635 aa).

In terms of domain architecture, Response regulatory spans arginine 19–valine 133. Aspartate 70 is subject to 4-aspartylphosphate. 2 disordered regions span residues leucine 144–arginine 196 and isoleucine 323–histidine 342. Acidic residues predominate over residues serine 166–glycine 186. Positions lysine 193 to arginine 196 match the Nuclear localization signal motif. Positions arginine 196–arginine 246 form a DNA-binding region, myb-like GARP.

The protein belongs to the ARR family. Type-B subfamily. Binds the target DNA as a monomer. Two-component system major event consists of a His-to-Asp phosphorelay between a sensor histidine kinase (HK) and a response regulator (RR). In plants, the His-to-Asp phosphorelay involves an additional intermediate named Histidine-containing phosphotransfer protein (HPt). This multistep phosphorelay consists of a His-Asp-His-Asp sequential transfer of a phosphate group between first a His and an Asp of the HK protein, followed by the transfer to a conserved His of the HPt protein and finally the transfer to an Asp in the receiver domain of the RR protein. Predominantly expressed in young leaf tissue developing anthers, and siliques.

The protein localises to the nucleus. Transcriptional activator that binds specifically to the DNA sequence 5'-[AG]GATT-3'. Functions as a response regulator involved in His-to-Asp phosphorelay signal transduction system. Phosphorylation of the Asp residue in the receiver domain activates the ability of the protein to promote the transcription of target genes. Could directly activate some type-A response regulators in response to cytokinins. In Arabidopsis thaliana (Mouse-ear cress), this protein is Two-component response regulator ARR18 (ARR18).